Here is a 674-residue protein sequence, read N- to C-terminus: ATP-dependent DNA helicase Rep (674 aa).

One can recognise a UvrD-like helicase ATP-binding domain in the interval 1-280; sequence MRLNPGQQHA…IKLEQNYRSS (280 aa). ATP contacts are provided by residues 22–29 and arginine 278; that span reads AGAGSGKT. In terms of domain architecture, UvrD-like helicase C-terminal spans 281-562; it reads GRILKAANIL…QLMTLHASKG (282 aa).

This sequence belongs to the helicase family. UvrD subfamily. As to quaternary structure, homodimer.

It catalyses the reaction Couples ATP hydrolysis with the unwinding of duplex DNA by translocating in the 3'-5' direction.. The enzyme catalyses ATP + H2O = ADP + phosphate + H(+). In terms of biological role, rep helicase is a single-stranded DNA-dependent ATPase involved in DNA replication; it can initiate unwinding at a nick in the DNA. It binds to the single-stranded DNA and acts in a progressive fashion along the DNA in the 3' to 5' direction. The polypeptide is ATP-dependent DNA helicase Rep (Salmonella typhimurium (strain LT2 / SGSC1412 / ATCC 700720)).